Consider the following 245-residue polypeptide: Uridylate kinase (245 aa).

Position 20 to 23 (20 to 23) interacts with ATP; the sequence is KLSG. Residue Gly-60 participates in UMP binding. 2 residues coordinate ATP: Gly-61 and Arg-65. UMP-binding positions include Asp-80 and 141–148; that span reads AGLPYFST. ATP-binding residues include Tyr-175 and Asp-178.

It belongs to the UMP kinase family. Homohexamer.

It localises to the cytoplasm. The catalysed reaction is UMP + ATP = UDP + ADP. Its pathway is pyrimidine metabolism; CTP biosynthesis via de novo pathway; UDP from UMP (UMPK route): step 1/1. Inhibited by UTP. Its function is as follows. Catalyzes the reversible phosphorylation of UMP to UDP. The chain is Uridylate kinase from Paenarthrobacter aurescens (strain TC1).